Consider the following 193-residue polypeptide: Holliday junction branch migration complex subunit RuvA (193 aa).

A domain I region spans residues 1 to 64 (MIGRIAGILL…EDAHLLYGFL (64 aa)). Positions 65 to 139 (TPQERTTFRE…GKLGADLGAL (75 aa)) are domain II. The tract at residues 139–143 (LAGAA) is flexible linker. Positions 144-193 (SASDHATDILNALLALGYSEKEGLAAIKNVPAGTGVSEGIKLALKALSKA) are domain III.

The protein belongs to the RuvA family. Homotetramer. Forms an RuvA(8)-RuvB(12)-Holliday junction (HJ) complex. HJ DNA is sandwiched between 2 RuvA tetramers; dsDNA enters through RuvA and exits via RuvB. An RuvB hexamer assembles on each DNA strand where it exits the tetramer. Each RuvB hexamer is contacted by two RuvA subunits (via domain III) on 2 adjacent RuvB subunits; this complex drives branch migration. In the full resolvosome a probable DNA-RuvA(4)-RuvB(12)-RuvC(2) complex forms which resolves the HJ.

The protein resides in the cytoplasm. Functionally, the RuvA-RuvB-RuvC complex processes Holliday junction (HJ) DNA during genetic recombination and DNA repair, while the RuvA-RuvB complex plays an important role in the rescue of blocked DNA replication forks via replication fork reversal (RFR). RuvA specifically binds to HJ cruciform DNA, conferring on it an open structure. The RuvB hexamer acts as an ATP-dependent pump, pulling dsDNA into and through the RuvAB complex. HJ branch migration allows RuvC to scan DNA until it finds its consensus sequence, where it cleaves and resolves the cruciform DNA. The chain is Holliday junction branch migration complex subunit RuvA from Burkholderia cenocepacia (strain HI2424).